Here is a 938-residue protein sequence, read N- to C-terminus: TFIIH basal transcription factor complex helicase/translocase XPB subunit (938 aa).

Residues 394–562 (FRSGNKAHQG…DLRHLVGPKL (169 aa)) enclose the Helicase ATP-binding domain. Residue 407 to 414 (LPCGAGKT) participates in ATP binding. The DEVH box motif lies at 515 to 518 (DEVH). A Helicase C-terminal domain is found at 627 to 781 (WCTQALLEFH…SYRVLQSDMV (155 aa)).

It belongs to the helicase family. RAD25/XPB subfamily. As to quaternary structure, component of the 7-subunit TFIIH core complex composed of XPB, XPD, SSL1, TFB1, TFB2, TFB4 and TFB5.

It carries out the reaction Couples ATP hydrolysis with the unwinding of duplex DNA by translocating in the 3'-5' direction.. It catalyses the reaction ATP + H2O = ADP + phosphate + H(+). Its function is as follows. ATP-dependent 3'-5' DNA helicase/translocase; binds dsDNA rather than ssDNA, unzipping it in a translocase rather than classical helicase activity. Component of the general transcription factor IIH (TFIIH) core complex, involved in spliced leader RNA (SL RNA) gene transcription by RNA polymerase II. TFIIH has an essential role in transcription initiation. When the pre-initiation complex (PIC) has been established, TFIIH is required for promoter opening and promoter escape. The ATPase activity of XPB is required for promoter opening and promoter escape. This chain is TFIIH basal transcription factor complex helicase/translocase XPB subunit, found in Trypanosoma brucei brucei (strain 927/4 GUTat10.1).